The sequence spans 381 residues: Ceramide-binding protein svf-1 (381 aa).

The segment at methionine 1 to proline 18 is peripherally associates with membranes.

The protein belongs to the SVF1 family.

It is found in the golgi apparatus. The protein resides in the cis-Golgi network membrane. The protein localises to the endoplasmic reticulum membrane. It localises to the cytoplasm. Its subcellular location is the nucleus. In terms of biological role, ceramide-binding protein that may transfer ceramides from the endoplasmic reticulum membrane to the cis-Golgi network membrane, and is thereby required for the biosynthesis of complex sphingolipids. The polypeptide is Ceramide-binding protein svf-1 (svf-1) (Neurospora crassa (strain ATCC 24698 / 74-OR23-1A / CBS 708.71 / DSM 1257 / FGSC 987)).